Consider the following 329-residue polypeptide: Phenylalanine--tRNA ligase alpha subunit (329 aa).

Glu-254 lines the Mg(2+) pocket.

The protein belongs to the class-II aminoacyl-tRNA synthetase family. Phe-tRNA synthetase alpha subunit type 1 subfamily. As to quaternary structure, tetramer of two alpha and two beta subunits. Mg(2+) serves as cofactor.

It localises to the cytoplasm. The catalysed reaction is tRNA(Phe) + L-phenylalanine + ATP = L-phenylalanyl-tRNA(Phe) + AMP + diphosphate + H(+). This is Phenylalanine--tRNA ligase alpha subunit from Histophilus somni (strain 2336) (Haemophilus somnus).